A 508-amino-acid chain; its full sequence is GMP synthase [glutamine-hydrolyzing] (508 aa).

The Glutamine amidotransferase type-1 domain maps to 1-189 (MILVLDFGSQ…ALLVCGCEKT (189 aa)). Residue cysteine 78 is the Nucleophile of the active site. Active-site residues include histidine 163 and glutamate 165. A GMPS ATP-PPase domain is found at 190–383 (WGMQHFAQRE…LGVSQDFLMR (194 aa)). 217–223 (SGGVDST) contributes to the ATP binding site.

As to quaternary structure, homodimer.

It carries out the reaction XMP + L-glutamine + ATP + H2O = GMP + L-glutamate + AMP + diphosphate + 2 H(+). It functions in the pathway purine metabolism; GMP biosynthesis; GMP from XMP (L-Gln route): step 1/1. Functionally, catalyzes the synthesis of GMP from XMP. The chain is GMP synthase [glutamine-hydrolyzing] (guaA) from Helicobacter pylori (strain J99 / ATCC 700824) (Campylobacter pylori J99).